Here is a 325-residue protein sequence, read N- to C-terminus: Cytochrome c biogenesis protein CcsA (325 aa).

The next 8 helical transmembrane spans lie at 12–32 (HISF…LLFV), 45–65 (GMII…VFSG), 72–92 (LYES…VPYF), 100–120 (LNTI…SGLL), 145–165 (MILG…ILVI), 231–251 (TISL…VWAN), 264–281 (ETWA…LHTR), and 293–313 (IVAS…NLLG).

Belongs to the CcmF/CycK/Ccl1/NrfE/CcsA family. As to quaternary structure, may interact with Ccs1.

The protein localises to the plastid. It localises to the chloroplast thylakoid membrane. Functionally, required during biogenesis of c-type cytochromes (cytochrome c6 and cytochrome f) at the step of heme attachment. This Glycine max (Soybean) protein is Cytochrome c biogenesis protein CcsA.